The sequence spans 448 residues: Probable glycine dehydrogenase (decarboxylating) subunit 1 (448 aa).

The protein belongs to the GcvP family. N-terminal subunit subfamily. As to quaternary structure, the glycine cleavage system is composed of four proteins: P, T, L and H. In this organism, the P 'protein' is a heterodimer of two subunits.

It catalyses the reaction N(6)-[(R)-lipoyl]-L-lysyl-[glycine-cleavage complex H protein] + glycine + H(+) = N(6)-[(R)-S(8)-aminomethyldihydrolipoyl]-L-lysyl-[glycine-cleavage complex H protein] + CO2. Functionally, the glycine cleavage system catalyzes the degradation of glycine. The P protein binds the alpha-amino group of glycine through its pyridoxal phosphate cofactor; CO(2) is released and the remaining methylamine moiety is then transferred to the lipoamide cofactor of the H protein. This is Probable glycine dehydrogenase (decarboxylating) subunit 1 from Bacillus pumilus (strain SAFR-032).